A 369-amino-acid chain; its full sequence is 3-methylarginine biosynthesis aminotransferase ArgM (369 aa).

An N6-(pyridoxal phosphate)lysine modification is found at K216.

Belongs to the class-I pyridoxal-phosphate-dependent aminotransferase family. Requires pyridoxal 5'-phosphate as cofactor.

It carries out the reaction L-arginine + 2-oxoglutarate = 5-guanidino-2-oxopentanoate + L-glutamate. It catalyses the reaction (3R)-5-guanidino-3-methyl-2-oxopentanoate + L-aspartate = (3R)-3-methyl-L-arginine + oxaloacetate. It participates in antibiotic biosynthesis. Functionally, aminotransferase involved in the formation of the rare amino acid 3-methylarginine (MeArg), which is incorporated into the peptidyl nucleoside antibiotic arginomycin. Catalyzes two rounds of transamination: the transfer of the amino group from L-arginine to 2-oxoglutarate to give glutamate and 5-guanidino-2-oxopentanoic acid, which will be methylated by ArgN. Then, ArgM specifically catalyzes transamination from the donor L-aspartate to the 5-guanidino-3-methyl-2-oxopentanoic acid produced by ArgN, generating the final product, 3-methylarginine. Cannot use arginine analogs, such as D-arginine, L-homoarginine and N-methylarginine for the first transamination. The chain is 3-methylarginine biosynthesis aminotransferase ArgM from Streptomyces arginensis.